The primary structure comprises 150 residues: MRTYDLSPFWRSTIGFDRLLNLVNDTVDNGDTYPPYDIERTSEDQYRISLALVGFTPDDVAITAERSTLTVEGRKTDEDERDYLYRGISVRPFRRVFNLADYVQVKDATFEDGLLKIALTREMPEALKPRQIAIDVAGNDHQRSDRTQAA.

One can recognise a sHSP domain in the interval 27 to 137 (VDNGDTYPPY…KPRQIAIDVA (111 aa)).

Belongs to the small heat shock protein (HSP20) family.

The sequence is that of Small heat shock protein HspE (hspE) from Bradyrhizobium diazoefficiens (strain JCM 10833 / BCRC 13528 / IAM 13628 / NBRC 14792 / USDA 110).